A 461-amino-acid chain; its full sequence is Argininosuccinate lyase (461 aa).

Belongs to the lyase 1 family. Argininosuccinate lyase subfamily.

It localises to the cytoplasm. It catalyses the reaction 2-(N(omega)-L-arginino)succinate = fumarate + L-arginine. The protein operates within amino-acid biosynthesis; L-arginine biosynthesis; L-arginine from L-ornithine and carbamoyl phosphate: step 3/3. In Aeromonas salmonicida (strain A449), this protein is Argininosuccinate lyase.